A 275-amino-acid chain; its full sequence is tRNA-splicing endonuclease subunit SEN34 (275 aa).

Active-site residues include Y209, H217, and K250.

This sequence belongs to the tRNA-intron endonuclease family. Heterotetramer composed of SEN2, SEN15, SEN34 and SEN54. Interacts directly with SEN15.

The protein resides in the nucleus. It localises to the endomembrane system. Its subcellular location is the mitochondrion outer membrane. It carries out the reaction pretRNA = a 3'-half-tRNA molecule with a 5'-OH end + a 5'-half-tRNA molecule with a 2',3'-cyclic phosphate end + an intron with a 2',3'-cyclic phosphate and a 5'-hydroxyl terminus.. Functionally, constitutes one of the two catalytic subunit of the tRNA-splicing endonuclease complex, a complex responsible for identification and cleavage of the splice sites in pre-tRNA. It cleaves pre-tRNA at the 5'- and 3'-splice sites to release the intron. The products are an intron and two tRNA half-molecules bearing 2',3'-cyclic phosphate and 5'-OH termini. There are no conserved sequences at the splice sites, but the intron is invariably located at the same site in the gene, placing the splice sites an invariant distance from the constant structural features of the tRNA body. It probably carries the active site for 3'-splice site cleavage. This chain is tRNA-splicing endonuclease subunit SEN34 (SEN34), found in Saccharomyces cerevisiae (strain ATCC 204508 / S288c) (Baker's yeast).